Reading from the N-terminus, the 383-residue chain is Acetylornithine deacetylase (383 aa).

His-80 is a binding site for Zn(2+). Asp-82 is a catalytic residue. Asp-112 serves as a coordination point for Zn(2+). The active site involves Glu-144. Glu-145, Glu-169, and His-355 together coordinate Zn(2+).

This sequence belongs to the peptidase M20A family. ArgE subfamily. Homodimer. Zn(2+) is required as a cofactor. Co(2+) serves as cofactor. It depends on glutathione as a cofactor.

It localises to the cytoplasm. The catalysed reaction is N(2)-acetyl-L-ornithine + H2O = L-ornithine + acetate. It functions in the pathway amino-acid biosynthesis; L-arginine biosynthesis; L-ornithine from N(2)-acetyl-L-ornithine (linear): step 1/1. Its function is as follows. Catalyzes the hydrolysis of the amide bond of N(2)-acetylated L-amino acids. Cleaves the acetyl group from N-acetyl-L-ornithine to form L-ornithine, an intermediate in L-arginine biosynthesis pathway, and a branchpoint in the synthesis of polyamines. The protein is Acetylornithine deacetylase of Escherichia coli (strain SMS-3-5 / SECEC).